A 799-amino-acid chain; its full sequence is Potassium transporter 21 (799 aa).

The Cytoplasmic segment spans residues 1–56 (MDPGVEKKKQQMELVDVESGGLPVERQDSLFREAVRAEHAGAAHWDEQDSWGRTMS). The helical transmembrane segment at 57–77 (LAFQCVGILYGDIGTSSLYVY) threads the bilayer. Residues 78–93 (SSTFEHGIGHPDDVVG) are Extracellular-facing. Residues 94-114 (VLSLIVYSFMLFTVIKIVFVA) form a helical membrane-spanning segment. Residues 115–181 (LHANDHGDGG…QLLEASKAAK (67 aa)) are Cytoplasmic-facing. The chain crosses the membrane as a helical span at residues 182 to 202 (ISLFLLTILAIAMVISDAVLT). Residues 203 to 219 (PPISVLSAVGGLREKVP) are Extracellular-facing. Residues 220–240 (HLTTDQIVWITVAILVVLFAI) traverse the membrane as a helical segment. Over 241 to 251 (QRYGTDKVGYS) the chain is Cytoplasmic. The chain crosses the membrane as a helical span at residues 252–272 (FAPIILLWLLLIGATGLYNLI). The Extracellular portion of the chain corresponds to 273–301 (KHDISVLRAFNPKYIIDYFRRNKKEGWVS). A helical transmembrane segment spans residues 302-322 (LGSILLCFTGSEALFANLGYF). Residues 323–328 (SIRSIQ) lie on the Cytoplasmic side of the membrane. The helical transmembrane segment at 329–349 (LSFSFALLPSVLLTYIGQAAF) threads the bilayer. Residues 350–362 (LSKNPKNVANTFF) are Extracellular-facing. Residues 363–383 (AATPISLFWPTFIMAIAASII) form a helical membrane-spanning segment. The Cytoplasmic segment spans residues 384–420 (GSQAMISCAFATVSHLQSLSCFPRVKILHTSKRFPGQ). The helical transmembrane segment at 421–441 (LYIPGVNFLLCVAACVVTVSF) threads the bilayer. The Extracellular portion of the chain corresponds to 442–452 (KTTVIIGKAHE). A helical membrane pass occupies residues 453–473 (ICVILVMIITTLLMTIVMLLV). Over 474–475 (WK) the chain is Cytoplasmic. A helical membrane pass occupies residues 476–496 (INILWVALFFITFTSTEAVYL). The Extracellular segment spans residues 497-508 (SSVLYKFTHGPY). A helical membrane pass occupies residues 509–529 (VPVAMSVVLMVVMIVWHYVHV). Topologically, residues 530–799 (KRYKYELEHT…LLKVGISYEI (270 aa)) are cytoplasmic.

Belongs to the HAK/KUP transporter (TC 2.A.72.3) family.

The protein localises to the membrane. In terms of biological role, high-affinity potassium transporter. The polypeptide is Potassium transporter 21 (HAK21) (Oryza sativa subsp. japonica (Rice)).